A 471-amino-acid chain; its full sequence is MKKMTLFTLSLLATAVQVGAQEYVPIVEKPIYITSSKIKCVLHTSGDFNATRDWCNAGASIDVRVNVAQMRSVQSATSDGFTPDAKIVRFTVDADKPGTGIHLVNELQQDHSWFQSWANRRTYIGPFASSYDLWVKPVSGYTPKKARDLPQNENKNYQHRDTYGYSIGINGKVGAEVNKDGPKVGGEVSGSFTYNYSKTLVFDTKDYRINNRSSLSDFDISFEREFGECDELRRQELGCYFTAAHWGSGWVFDKTKFNPISYSNFKPNYDVLYEAPVSETGVTDFEMGVKLNYRARFGTVLPSALFSVYGSAGSSTNSSTVKQRIRIDWNHPLFEAEAHVTLQSLSNNDLCLDVYGENGDKTVAGGSVNGWSCHGSWNQVWGLDKEERYRSRVASDRCLTVNADKTLTVEQCGANLAQKWYWEGDKLISRYVDGNNTRYLLNIVGGRNVQVTPENEANQARWKPTLQQVKL.

The first 20 residues, 1–20 (MKKMTLFTLSLLATAVQVGA), serve as a signal peptide directing secretion. One can recognise a Ricin B-type lectin domain in the interval 338 to 465 (AHVTLQSLSN…EANQARWKPT (128 aa)).

It belongs to the HlyA hemolysin family.

Functionally, bacterial hemolysins are exotoxins that attack blood cell membranes and cause cell rupture by mechanisms not clearly defined. The chain is Cytolysin (vvhA) from Vibrio vulnificus (strain CMCP6).